Here is an 83-residue protein sequence, read N- to C-terminus: Three-finger toxin MALT0058C (83 aa).

Residues 1–21 form the signal peptide; that stretch reads MKTLLLTLVVVTIVCLDFGHT. Intrachain disulfides connect cysteine 24-cysteine 45, cysteine 38-cysteine 62, cysteine 64-cysteine 75, and cysteine 76-cysteine 81.

It belongs to the three-finger toxin family. Short-chain subfamily. Type I alpha-neurotoxin sub-subfamily. In terms of tissue distribution, expressed by the venom gland.

It localises to the secreted. Binds to muscle nicotinic acetylcholine receptor (nAChR) and inhibits acetylcholine from binding to the receptor, thereby impairing neuromuscular transmission. The sequence is that of Three-finger toxin MALT0058C from Micrurus altirostris (Uruguayan coral snake).